Consider the following 271-residue polypeptide: MASENMTPQEYIGHHLNNLQLDLRTFSLVDPQNPPATFWTLNIDSMFFSVVLGLLFLVMFRSVAKKATSGVPGKFQTAIELIVGFVHGSVKDMYHGKSKLIAPLALTIFVWVFLMNLMDLLPIDLLPYIAEHWLGLPATRVVPSADVNITLSMALGVFILILFYSIKMKGIGGFAKELTLQPFNHWAFIPVNLILEGVSLLSKPVSLGLRLFGNMYAGELIFILIAGLLPWWSQWILNVPWAIFHILIITLQAFIFMVLTIVYLSMASEEH.

The next 5 membrane-spanning stretches (helical) occupy residues 38–58 (FWTL…LFLV), 100–120 (LIAP…LMDL), 146–166 (DVNI…FYSI), 220–240 (LIFI…LNVP), and 242–262 (AIFH…LTIV).

This sequence belongs to the ATPase A chain family. As to quaternary structure, F-type ATPases have 2 components, CF(1) - the catalytic core - and CF(0) - the membrane proton channel. CF(1) has five subunits: alpha(3), beta(3), gamma(1), delta(1), epsilon(1). CF(0) has three main subunits: a(1), b(2) and c(9-12). The alpha and beta chains form an alternating ring which encloses part of the gamma chain. CF(1) is attached to CF(0) by a central stalk formed by the gamma and epsilon chains, while a peripheral stalk is formed by the delta and b chains.

It is found in the cell inner membrane. Its function is as follows. Key component of the proton channel; it plays a direct role in the translocation of protons across the membrane. In Salmonella choleraesuis (strain SC-B67), this protein is ATP synthase subunit a.